The sequence spans 148 residues: Glutamyl-tRNA(Gln) amidotransferase subunit C, mitochondrial (148 aa).

It belongs to the GatC family. As to quaternary structure, subunit of the heterotrimeric GatCAB amidotransferase (AdT) complex, composed of A, B and C subunits.

It is found in the mitochondrion. The catalysed reaction is L-glutamyl-tRNA(Gln) + L-glutamine + ATP + H2O = L-glutaminyl-tRNA(Gln) + L-glutamate + ADP + phosphate + H(+). Its function is as follows. Allows the formation of correctly charged Gln-tRNA(Gln) through the transamidation of misacylated Glu-tRNA(Gln) in the mitochondria. The reaction takes place in the presence of glutamine and ATP through an activated gamma-phospho-Glu-tRNA(Gln). This chain is Glutamyl-tRNA(Gln) amidotransferase subunit C, mitochondrial, found in Drosophila sechellia (Fruit fly).